The following is a 650-amino-acid chain: DNA gyrase subunit B (650 aa).

Positions 429–543 (NELFIVEGDS…AGYVYIAQPP (115 aa)) constitute a Toprim domain. The Mg(2+) site is built by glutamate 435, aspartate 508, and aspartate 510.

This sequence belongs to the type II topoisomerase GyrB family. In terms of assembly, heterotetramer, composed of two GyrA and two GyrB chains. In the heterotetramer, GyrA contains the active site tyrosine that forms a transient covalent intermediate with DNA, while GyrB binds cofactors and catalyzes ATP hydrolysis. Mg(2+) serves as cofactor. It depends on Mn(2+) as a cofactor. Ca(2+) is required as a cofactor.

It is found in the cytoplasm. The enzyme catalyses ATP-dependent breakage, passage and rejoining of double-stranded DNA.. Its function is as follows. A type II topoisomerase that negatively supercoils closed circular double-stranded (ds) DNA in an ATP-dependent manner to modulate DNA topology and maintain chromosomes in an underwound state. Negative supercoiling favors strand separation, and DNA replication, transcription, recombination and repair, all of which involve strand separation. Also able to catalyze the interconversion of other topological isomers of dsDNA rings, including catenanes and knotted rings. Type II topoisomerases break and join 2 DNA strands simultaneously in an ATP-dependent manner. In Streptococcus pyogenes serotype M3 (strain ATCC BAA-595 / MGAS315), this protein is DNA gyrase subunit B.